The sequence spans 63 residues: Cytochrome c oxidase subunit 7C, mitochondrial (63 aa).

Residues 1–16 constitute a mitochondrion transit peptide; it reads MWGQGVRRFTTSVVRR. Residues 17–33 are Mitochondrial matrix-facing; the sequence is SHYEEGPGKNLPFSVEN. Lys-25 carries the N6-acetyllysine; alternate modification. N6-succinyllysine; alternate is present on Lys-25. A helical transmembrane segment spans residues 34–60; sequence KWRLLAMMTLYLGSGFAAPFFIVRHQL. At 61–63 the chain is on the mitochondrial intermembrane side; it reads LKK.

This sequence belongs to the cytochrome c oxidase VIIc family. Component of the cytochrome c oxidase (complex IV, CIV), a multisubunit enzyme composed of 14 subunits. The complex is composed of a catalytic core of 3 subunits MT-CO1, MT-CO2 and MT-CO3, encoded in the mitochondrial DNA, and 11 supernumerary subunits COX4I, COX5A, COX5B, COX6A, COX6B, COX6C, COX7A, COX7B, COX7C, COX8 and NDUFA4, which are encoded in the nuclear genome. The complex exists as a monomer or a dimer and forms supercomplexes (SCs) in the inner mitochondrial membrane with NADH-ubiquinone oxidoreductase (complex I, CI) and ubiquinol-cytochrome c oxidoreductase (cytochrome b-c1 complex, complex III, CIII), resulting in different assemblies (supercomplex SCI(1)III(2)IV(1) and megacomplex MCI(2)III(2)IV(2)). Interacts with RAB5IF.

It localises to the mitochondrion inner membrane. It functions in the pathway energy metabolism; oxidative phosphorylation. Its function is as follows. Component of the cytochrome c oxidase, the last enzyme in the mitochondrial electron transport chain which drives oxidative phosphorylation. The respiratory chain contains 3 multisubunit complexes succinate dehydrogenase (complex II, CII), ubiquinol-cytochrome c oxidoreductase (cytochrome b-c1 complex, complex III, CIII) and cytochrome c oxidase (complex IV, CIV), that cooperate to transfer electrons derived from NADH and succinate to molecular oxygen, creating an electrochemical gradient over the inner membrane that drives transmembrane transport and the ATP synthase. Cytochrome c oxidase is the component of the respiratory chain that catalyzes the reduction of oxygen to water. Electrons originating from reduced cytochrome c in the intermembrane space (IMS) are transferred via the dinuclear copper A center (CU(A)) of subunit 2 and heme A of subunit 1 to the active site in subunit 1, a binuclear center (BNC) formed by heme A3 and copper B (CU(B)). The BNC reduces molecular oxygen to 2 water molecules using 4 electrons from cytochrome c in the IMS and 4 protons from the mitochondrial matrix. This is Cytochrome c oxidase subunit 7C, mitochondrial (COX7C) from Carlito syrichta (Philippine tarsier).